The chain runs to 132 residues: MVMTDPIADMLTRIRNANMVRHEKLEMPASTIKREVAEILKREGFIRDVEYLEDSKQGTLRVFLKYGASNERVITGLKRISKPGLRVYAKADEIPKVLGGLGIAIVSTSKGVMTDKEARQQKVGGEVIAYIW.

The protein belongs to the universal ribosomal protein uS8 family. Part of the 30S ribosomal subunit. Contacts proteins S5 and S12.

One of the primary rRNA binding proteins, it binds directly to 16S rRNA central domain where it helps coordinate assembly of the platform of the 30S subunit. This is Small ribosomal subunit protein uS8 from Exiguobacterium sibiricum (strain DSM 17290 / CCUG 55495 / CIP 109462 / JCM 13490 / 255-15).